A 239-amino-acid polypeptide reads, in one-letter code: LexA repressor (239 aa).

Positions 26–46 (FDEMKDALDLASKSGIHRLIT) form a DNA-binding region, H-T-H motif. Residues S159 and K197 each act as for autocatalytic cleavage activity in the active site.

It belongs to the peptidase S24 family. Homodimer.

The catalysed reaction is Hydrolysis of Ala-|-Gly bond in repressor LexA.. Functionally, represses a number of genes involved in the response to DNA damage (SOS response), including recA and lexA. In the presence of single-stranded DNA, RecA interacts with LexA causing an autocatalytic cleavage which disrupts the DNA-binding part of LexA, leading to derepression of the SOS regulon and eventually DNA repair. This chain is LexA repressor, found in Allorhizobium ampelinum (strain ATCC BAA-846 / DSM 112012 / S4) (Agrobacterium vitis (strain S4)).